Here is an 882-residue protein sequence, read N- to C-terminus: Alanine--tRNA ligase (882 aa).

The Zn(2+) site is built by histidine 568, histidine 572, cysteine 670, and histidine 674.

This sequence belongs to the class-II aminoacyl-tRNA synthetase family. Zn(2+) serves as cofactor.

The protein resides in the cytoplasm. It catalyses the reaction tRNA(Ala) + L-alanine + ATP = L-alanyl-tRNA(Ala) + AMP + diphosphate. Catalyzes the attachment of alanine to tRNA(Ala) in a two-step reaction: alanine is first activated by ATP to form Ala-AMP and then transferred to the acceptor end of tRNA(Ala). Also edits incorrectly charged Ser-tRNA(Ala) and Gly-tRNA(Ala) via its editing domain. The sequence is that of Alanine--tRNA ligase from Lactobacillus johnsonii (strain CNCM I-12250 / La1 / NCC 533).